Here is a 2448-residue protein sequence, read N- to C-terminus: MKIFIKDKTSTNLLNIFALYFSAICFIYCQNSCQPQNLKTDTNSQSLNLSSSTQMFMLYGWVSSTQQTSYNIYKIKDSVNDPVLSLDFNYSNQILTISGKNIQNIYQQNSLWFFFLTQIDQNGQQLTVYFSQPQIQRDYYNKFNLASQLTLQSSGQITLSISAANYKNLQFINGANFASSGYQNAQSFMFQDFQGYLYSFKLDQVYERSLLKEDVQQRMYPIYPTIDGQLNSATYSKAYQGIQLINQNITLSNGQFMRYYSTFQIQNVILTDPFFLGFYFRLTNLTQDDNNIFYIVSEGLQNPESISFVMIQNSLKIKMIDKQYLLYSNNLFTNQWYYLSLTWASIQVDSTQKFQSQIMVSIRQQYSQSAYKQLVQLAYPLSVQSTTYSIYFGYVPSQYNSQSTNYGIYGYISKILIGQGGSLISNTDEFKNTCKIQNQCDVLFLGSQGTSCQVCSSGYLNLSSMDSNTCIYTTCPSGYYFSNEFMQCQQCNQACLTCFSAGNDSCPQCLNGYYQYQQTCFKKCPDGFYISDQANFKCEKCNASCLSCTGPSFDQCLSCKSGFYLSSNTCQPCSQTCSQCTDMSTCQSCINGYYLDSNNSCISSCPNGQFANVQNQCQNCSIPNCYLCSSLTSCTQCNDKFYLSNNQCQSCDPTCTKCFGPTNQQCFACIQNKYLYNSACLSQSDCTALVGYFPNFQTSVCQACQGKCKTCTSSNTCSSCINGYYLQDSNCLPCPPQCSSCQSSTVCTSCYQNYYLDGNNNCSLTCPDGTFGNSQNICQTCIDGCQTCYGPTLLECYSCEQGFFFQAFQITNNSQAIQKGMCIACSQFCLSCTSRYYCTACKPLRFMKILPNLNQQLCVDDCGSYYLSDETDYTCKSCQSGCQTCSITVSNCQTCIQGYYNSGGRVCNQCLSKCLQCSQIGICTSCASGFYLQNNSCQNACLSGFPDSSQNVCVACHPTCVTCQGPLATDCLTCISGYYLNPANNICQICDPGCYSCSSKTNCSQCNNNYFLYSNYCYLACPSRTYPTQVNGISVCLPCTDPACLQCSNLQCITCMAGYFINQGACQVCDSSCNTCMNSPKICTSCDQTKKLVLSNTQCVSQCASNQYVDSVQNRCLPCFYSCSSCFGPNSNQCFSCQPNGFYLTNQTQCSICDISCLQCSGPGFDSCIQCAQGYYKLGDSVCVQSCPDGFFLNTSNNQCQSCNQVCFNCNGPQNSDCTSCAAGYYQSISNQNGIICSQCNSKCLTCNGPFSSNCILCNSGYVKYNSQCQTFCPQGYRSIKGVCIQCPSNCGYCVNQSLNSNSQVCTQCLQNYILNQLDNTCVQVCPNGTFQVFIASNQQAPDISSYYCQSCDQGCLSCSQSSSNCTQCKTGYIFHETVNQCVYGGTCLNGFILYIDSQTQNQYCKVCKINCVSCIQQFFYYQENCYSSCPVGTVQVSQSNICVLNLLPQLTILTNPAQVTFKEDVTIVTQIQSPIQITSMVWSLISPSPTSDLGSKFLQNLILNNITNLYIPLSNISPLSLYQIQFTIANSKGSATQTISLNTQLMLTPGTVNCQPSSNIFSGTTQIQLTLLNFIHPSPLFYDYILSPISNTYSFQRINNMTATNQDLLSLDNFFVVFITTNSKQLNLTTYQVRQQQSINVVVNVFNQYVFYQTSSQVQFLKGSAFTYNTTDINSDLTKFDTLVASMIANTNQLTQLSTFIQDIRTLKEVLYNYLQNAYSQSQQQIYLQKSFFQVINSDISCSLNLCMNSGKCVPNSIFCSCPSAFTGPKCQIDVKRSQQLSQYLEGALSLIYQNMASNISNDGLVNILMDISFFRDMLDKAIYPVYFQILSKYFSQKLTTVITNNGNVSFLSSKTLSYCFIQIFENLNPIIINYNSTQLPDKSTFLQLLTNIKDLSIITIITSQNSPLNVASPYYFYASIGVITSSMFPQILDQYQNYYNTSNSASFSSSLLMRNLQLQEQTSQQTDPSQNNVNVGQEFGTGIDLLKSLFNFPVIEYQSNRHFIYLPQSTITSFSNLRIVVAEIFDIASALPYSSQLLSQQFLLATGFFTVIISQSQQIIPIINNPNPITIIIPKMVSYPSLNYVDPKLPVYNCLHYDQNKDQFETNSCFFQRENSTHIACSCYTIKSYITVQINKQNIQSLPVYNDIILSNNFTFDSYVTEKLRVYKEVNKFTDANTTFSVEQEKFQELMILKNYYGLYIMIIISLGIGAAFLGYSAIKSKYLDEKINMKDHSRIYFLYYFPIISFLVGPTNQFVNNYTRAVTSLTIIASHFAFSSIYVQILPFDMQSSTQQILTSIITVSSTSVCIYWTIGVYHMIVVGLNNNLNEEKNTGSTWKIVEGFKYSFGVTMIGLVLAVLALISISVFIGLCDDDQFNIWQDIIKAVFLIDLIADAIVVFILIIVGYDSTIGSFFALRGYGITIQSDNKVKHQKLDKEVKLDEKKNTK.

The chain crosses the membrane as a helical span at residues 9–29 (TSTNLLNIFALYFSAICFIYC). Residues N48, N89, N248, N284, N461, N503, N542, N598, and N619 are each glycosylated (N-linked (GlcNAc...) asparagine). 4 FU repeats span residues 431-481 (KNTC…GYYF), 485-530 (FMQC…GFYI), 535-566 (NFKC…FYLS), and 567-611 (SNTC…GQFA). FU repeat units follow at residues 645-694 (NNQC…GYFP), 698-727 (TSVC…YYLQ), 728-772 (DSNC…GTFG), 775-813 (QNIC…ITNN), 819-868 (KGMC…YYLS), 904-947 (GRVC…GFPD), 950-983 (QNVC…LNPA), 984-1027 (NNIC…RTYP), 1063-1109 (QGAC…NQYV), and 1113-1144 (QNRC…GFYL). N-linked (GlcNAc...) asparagine glycans are attached at residues N761 and N812. N934 carries N-linked (GlcNAc...) asparagine glycosylation. The N-linked (GlcNAc...) asparagine glycan is linked to N1002. An N-linked (GlcNAc...) asparagine glycan is attached at N1146. An FU 15 repeat occupies 1147 to 1193 (QTQCSICDISCLQCSGPGFDSCIQCAQGYYKLGDSVCVQSCPDGFFL). An N-linked (GlcNAc...) asparagine glycan is attached at N1194. FU repeat units lie at residues 1197 to 1232 (NNQC…ISNQ), 1234 to 1279 (GIIC…GYRS), 1281 to 1332 (KGVC…GTFQ), 1346 to 1394 (SYYC…GFIL), and 1402 to 1436 (NQYC…GTVQ). N1296, N1328, and N1365 each carry an N-linked (GlcNAc...) asparagine glycan. Residues N1506, N1601, N1628, and N1670 are each glycosylated (N-linked (GlcNAc...) asparagine). The region spanning 1739–1773 (SDISCSLNLCMNSGKCVPNSIFCSCPSAFTGPKCQ) is the EGF-like domain. Intrachain disulfides connect C1743/C1754, C1748/C1761, and C1763/C1772. N-linked (GlcNAc...) asparagine glycans are attached at residues N1800, N1849, N1877, N1942, N2117, N2155, and N2179. Helical transmembrane passes span 2201 to 2221 (LYIM…YSAI) and 2238 to 2258 (IYFL…NQFV). N-linked (GlcNAc...) asparagine glycosylation occurs at N2260. 4 consecutive transmembrane segments (helical) span residues 2267-2287 (SLTI…ILPF), 2296-2316 (ILTS…TIGV), 2352-2372 (MIGL…IGLC), and 2386-2406 (AVFL…IIVG).

The protein localises to the membrane. Its function is as follows. Required for mucocyst secretion. This Tetrahymena thermophila (strain SB210) protein is Cysteine repeat modular protein 1.